A 365-amino-acid polypeptide reads, in one-letter code: 2-aminoethylphosphonate--pyruvate transaminase (365 aa).

An N6-(pyridoxal phosphate)lysine modification is found at lysine 194.

The protein belongs to the class-V pyridoxal-phosphate-dependent aminotransferase family. PhnW subfamily. In terms of assembly, homodimer. Pyridoxal 5'-phosphate serves as cofactor.

It catalyses the reaction (2-aminoethyl)phosphonate + pyruvate = phosphonoacetaldehyde + L-alanine. Involved in phosphonate degradation. The chain is 2-aminoethylphosphonate--pyruvate transaminase from Bacillus cytotoxicus (strain DSM 22905 / CIP 110041 / 391-98 / NVH 391-98).